The primary structure comprises 252 residues: Triosephosphate isomerase (252 aa).

Substrate is bound at residue 10-12; it reads NWK. The Electrophile role is filled by H96. E168 serves as the catalytic Proton acceptor. Residues G174, S214, and 235-236 each bind substrate; that span reads GG.

It belongs to the triosephosphate isomerase family. In terms of assembly, homodimer.

The protein resides in the cytoplasm. It carries out the reaction D-glyceraldehyde 3-phosphate = dihydroxyacetone phosphate. The protein operates within carbohydrate biosynthesis; gluconeogenesis. It functions in the pathway carbohydrate degradation; glycolysis; D-glyceraldehyde 3-phosphate from glycerone phosphate: step 1/1. In terms of biological role, involved in the gluconeogenesis. Catalyzes stereospecifically the conversion of dihydroxyacetone phosphate (DHAP) to D-glyceraldehyde-3-phosphate (G3P). The chain is Triosephosphate isomerase from Streptococcus pyogenes serotype M18 (strain MGAS8232).